The following is a 1296-amino-acid chain: Phosphoribosylformylglycinamidine synthase (1296 aa).

Positions 300 to 325 (APFSGAATGSGGEIRDEGATGRGSKP) are disordered. ATP contacts are provided by residues 304 to 315 (GAATGSGGEIRD) and A675. E715, N719, and D885 together coordinate Mg(2+). ATP is bound at residue S887. Residues 1043 to 1296 (MAILREQGVN…MFRNARKNVG (254 aa)) enclose the Glutamine amidotransferase type-1 domain. Residue C1136 is the Nucleophile of the active site. The interval 1232-1253 (TQYPANPNGSPEGITGITSTDG) is disordered. Active-site residues include H1261 and E1263.

This sequence in the N-terminal section; belongs to the FGAMS family. Monomer.

The protein localises to the cytoplasm. The catalysed reaction is N(2)-formyl-N(1)-(5-phospho-beta-D-ribosyl)glycinamide + L-glutamine + ATP + H2O = 2-formamido-N(1)-(5-O-phospho-beta-D-ribosyl)acetamidine + L-glutamate + ADP + phosphate + H(+). The protein operates within purine metabolism; IMP biosynthesis via de novo pathway; 5-amino-1-(5-phospho-D-ribosyl)imidazole from N(2)-formyl-N(1)-(5-phospho-D-ribosyl)glycinamide: step 1/2. Its function is as follows. Phosphoribosylformylglycinamidine synthase involved in the purines biosynthetic pathway. Catalyzes the ATP-dependent conversion of formylglycinamide ribonucleotide (FGAR) and glutamine to yield formylglycinamidine ribonucleotide (FGAM) and glutamate. The chain is Phosphoribosylformylglycinamidine synthase from Pseudoalteromonas translucida (strain TAC 125).